The sequence spans 412 residues: Argininosuccinate synthase (412 aa).

ATP is bound by residues 10-18 and Ala36; that span reads AYSGGLDTS. Positions 87 and 92 each coordinate L-citrulline. Tyr87 is modified (phosphotyrosine). An N6-acetyllysine modification is found at Lys112. The residue at position 113 (Tyr113) is a Phosphotyrosine. Position 115–123 (115–123) interacts with ATP; that stretch reads SHGATGKGN. Residues Thr119, Asn123, and Asp124 each contribute to the L-aspartate site. Asn123 contributes to the L-citrulline binding site. L-citrulline is bound at residue Arg127. Residues Lys165 and Lys176 each carry the N6-acetyllysine; by CLOCK modification. L-citrulline is bound by residues Ser180 and Ser189. Position 180 is a phosphoserine (Ser180). Position 219 is a phosphoserine (Ser219). L-citrulline is bound by residues Glu270 and Tyr282.

It belongs to the argininosuccinate synthase family. Type 1 subfamily. As to quaternary structure, homotetramer. Interacts with NMRAL1. Interacts with CLOCK; in a circadian manner. Forms tissue-specific complexes with ASL, SLC7A1, HSP90AA1 and nitric oxide synthase NOS1, NOS2 or NOS3; the complex regulates cell-autonomous L-arginine synthesis and citrulline recycling while channeling extracellular L-arginine to nitric oxide synthesis pathway. Acetylated by CLOCK in a circadian manner which negatively regulates its enzyme activity. Deacetylated by histone deacetylases.

It is found in the cytoplasm. The protein localises to the cytosol. The catalysed reaction is L-citrulline + L-aspartate + ATP = 2-(N(omega)-L-arginino)succinate + AMP + diphosphate + H(+). It functions in the pathway amino-acid biosynthesis; L-arginine biosynthesis; L-arginine from L-ornithine and carbamoyl phosphate: step 2/3. The protein operates within nitrogen metabolism; urea cycle; (N(omega)-L-arginino)succinate from L-aspartate and L-citrulline: step 1/1. Its function is as follows. One of the enzymes of the urea cycle, the metabolic pathway transforming neurotoxic amonia produced by protein catabolism into inocuous urea in the liver of ureotelic animals. Catalyzes the formation of arginosuccinate from aspartate, citrulline and ATP and together with ASL it is responsible for the biosynthesis of arginine in most body tissues. This Bos taurus (Bovine) protein is Argininosuccinate synthase.